Consider the following 184-residue polypeptide: UPF0316 protein BLi00691/BL01474 (184 aa).

3 consecutive transmembrane segments (helical) span residues 9–29, 41–61, and 67–87; these read GVIM…FLTL, LAAF…GLVL, and IQNV…GTKI.

It belongs to the UPF0316 family.

The protein resides in the cell membrane. This chain is UPF0316 protein BLi00691/BL01474, found in Bacillus licheniformis (strain ATCC 14580 / DSM 13 / JCM 2505 / CCUG 7422 / NBRC 12200 / NCIMB 9375 / NCTC 10341 / NRRL NRS-1264 / Gibson 46).